The sequence spans 241 residues: Adenosine 5'-phosphosulfate reductase (241 aa).

[4Fe-4S] cluster contacts are provided by C122, C123, C205, and C208. C231 (nucleophile; cysteine thiosulfonate intermediate) is an active-site residue.

This sequence belongs to the PAPS reductase family. CysH subfamily. It depends on [4Fe-4S] cluster as a cofactor.

It localises to the cytoplasm. The enzyme catalyses [thioredoxin]-disulfide + sulfite + AMP + 2 H(+) = adenosine 5'-phosphosulfate + [thioredoxin]-dithiol. Its pathway is sulfur metabolism; hydrogen sulfide biosynthesis; sulfite from sulfate. In terms of biological role, catalyzes the formation of sulfite from adenosine 5'-phosphosulfate (APS) using thioredoxin as an electron donor. This is Adenosine 5'-phosphosulfate reductase from Shouchella clausii (strain KSM-K16) (Alkalihalobacillus clausii).